The primary structure comprises 560 residues: DNA ligase B (560 aa).

The active-site N6-AMP-lysine intermediate is the K124.

It belongs to the NAD-dependent DNA ligase family. LigB subfamily.

The enzyme catalyses NAD(+) + (deoxyribonucleotide)n-3'-hydroxyl + 5'-phospho-(deoxyribonucleotide)m = (deoxyribonucleotide)n+m + AMP + beta-nicotinamide D-nucleotide.. Catalyzes the formation of phosphodiester linkages between 5'-phosphoryl and 3'-hydroxyl groups in double-stranded DNA using NAD as a coenzyme and as the energy source for the reaction. This Escherichia coli (strain SMS-3-5 / SECEC) protein is DNA ligase B.